We begin with the raw amino-acid sequence, 305 residues long: Olfactory receptor 4F4 (305 aa).

Over 1 to 18 (MVTEFIFLGLSDSQELQT) the chain is Extracellular. Residues 19 to 42 (FLFMLFFVFYGGIVFGNLLIVITV) traverse the membrane as a helical segment. The Cytoplasmic segment spans residues 43–50 (VSDSHLHS). The chain crosses the membrane as a helical span at residues 51–72 (PMYFLLANLSLIDLSLSSVTAP). Topologically, residues 73–93 (KMITDFFSQRKVISFKGCLVQ) are extracellular. An intrachain disulfide couples cysteine 90 to cysteine 182. A helical membrane pass occupies residues 94 to 113 (IFLLHFFGGSEMVILIAMGF). Over 114–132 (DRYIAICKPLHYTTIMCGN) the chain is Cytoplasmic. Residues 133 to 151 (ACVGIMAVAWGIGFLHSVS) form a helical membrane-spanning segment. Over 152 to 188 (QLAFAVHLPFCGPNEVDSFYCDLPRVIKLACTDTYRL) the chain is Extracellular. A helical membrane pass occupies residues 189–212 (DIMVIANSGVLTVCSFVLLIISYT). Residues 213 to 228 (IILMTIQHCPLDKSSK) are Cytoplasmic-facing. The chain crosses the membrane as a helical span at residues 229–251 (ALSTLTAHITVVLLFFGPCVFIY). Over 252–262 (AWPFPIKSLDK) the chain is Extracellular. The chain crosses the membrane as a helical span at residues 263-282 (FLAVFYSVITPLLNPIIYTL). The Cytoplasmic portion of the chain corresponds to 283-305 (RNKDMKTAIRRLRKWDAHSSVKF).

This sequence belongs to the G-protein coupled receptor 1 family.

Its subcellular location is the cell membrane. Odorant receptor. The polypeptide is Olfactory receptor 4F4 (OR4F4) (Homo sapiens (Human)).